The sequence spans 185 residues: 3-hexulose-6-phosphate isomerase (185 aa).

Positions 29 to 172 (LADHILSSHQ…ILKLMEKKGL (144 aa)) constitute an SIS domain. Substrate contacts are provided by residues S47 and 86 to 91 (SGSGET). The Proton acceptor role is filled by E152.

The protein belongs to the SIS family. PHI subfamily. In terms of assembly, homotetramer.

It carries out the reaction D-arabino-hex-3-ulose 6-phosphate = beta-D-fructose 6-phosphate. It functions in the pathway one-carbon metabolism; formaldehyde assimilation via RuMP pathway; D-fructose 6-phosphate from D-ribulose 5-phosphate and formaldehyde: step 2/2. Catalyzes the isomerization between 3-hexulose 6-phosphate and fructose 6-phosphate. Together with HxlA, may act as a formaldehyde detoxification system. In Bacillus subtilis (strain 168), this protein is 3-hexulose-6-phosphate isomerase (hxlB).